Reading from the N-terminus, the 395-residue chain is Putative carbonic anhydrase 1 (395 aa).

The first 24 residues, 1–24 (MKLQGAGCVVAAVLGALFIVNVES), serve as a signal peptide directing secretion. The Alpha-carbonic anhydrase domain occupies 42 to 365 (ISYDVRSTIG…LNDRPVFLVR (324 aa)). Zn(2+) contacts are provided by histidine 139, histidine 141, and histidine 165.

Belongs to the alpha-carbonic anhydrase family. Zn(2+) is required as a cofactor. As to expression, component of the acid-insoluble and acid-soluble organic matrix of calcified layers of the shell (at protein level).

The protein resides in the secreted. The catalysed reaction is hydrogencarbonate + H(+) = CO2 + H2O. Functionally, reversible hydration of carbon dioxide. This chain is Putative carbonic anhydrase 1, found in Lottia gigantea (Giant owl limpet).